Consider the following 658-residue polypeptide: UvrABC system protein B (658 aa).

The Helicase ATP-binding domain maps to 25–182 (DSIRSGNKFN…LKLVDMGYKR (158 aa)). ATP is bound at residue 38–45 (GVTGSGKT). The Beta-hairpin motif lies at 91-114 (YYDYYQPEAYIPRQDLFIEKDSSI). The 164-residue stretch at 433–596 (QVEVLFDRAK…TPRSASRNLE (164 aa)) folds into the Helicase C-terminal domain. A UVR domain is found at 623-658 (AKIVKELRKQMLEAAKNLEFEKAAALRDEIAKLREL).

The protein belongs to the UvrB family. As to quaternary structure, forms a heterotetramer with UvrA during the search for lesions. Interacts with UvrC in an incision complex.

Its subcellular location is the cytoplasm. The UvrABC repair system catalyzes the recognition and processing of DNA lesions. A damage recognition complex composed of 2 UvrA and 2 UvrB subunits scans DNA for abnormalities. Upon binding of the UvrA(2)B(2) complex to a putative damaged site, the DNA wraps around one UvrB monomer. DNA wrap is dependent on ATP binding by UvrB and probably causes local melting of the DNA helix, facilitating insertion of UvrB beta-hairpin between the DNA strands. Then UvrB probes one DNA strand for the presence of a lesion. If a lesion is found the UvrA subunits dissociate and the UvrB-DNA preincision complex is formed. This complex is subsequently bound by UvrC and the second UvrB is released. If no lesion is found, the DNA wraps around the other UvrB subunit that will check the other stand for damage. The protein is UvrABC system protein B of Campylobacter fetus subsp. fetus (strain 82-40).